Here is a 476-residue protein sequence, read N- to C-terminus: Probable secreted beta-glucosidase SIM1 (476 aa).

Residues 1 to 19 form the signal peptide; it reads MKFSTAVTTLISSGAIVSA. Positions 111 to 203 are enriched in low complexity; it reads ATASTSQGAS…SSSSSSSGSG (93 aa). Residues 111–214 form a disordered region; it reads ATASTSQGAS…IYGDLADFSG (104 aa). The N-linked (GlcNAc...) asparagine glycan is linked to Asn-423.

The protein belongs to the SUN family.

Its subcellular location is the secreted. The protein resides in the cell wall. In terms of biological role, involved in the remodeling of the cell wall during the various phases of yeast culture development and under various environmental conditions. Required for the maintenance of the CLB5 kinase activity. This is Probable secreted beta-glucosidase SIM1 (SIM1) from Saccharomyces cerevisiae (strain ATCC 204508 / S288c) (Baker's yeast).